Consider the following 117-residue polypeptide: Large ribosomal subunit protein uL18 (117 aa).

It belongs to the universal ribosomal protein uL18 family. As to quaternary structure, part of the 50S ribosomal subunit; part of the 5S rRNA/L5/L18/L25 subcomplex. Contacts the 5S and 23S rRNAs.

In terms of biological role, this is one of the proteins that bind and probably mediate the attachment of the 5S RNA into the large ribosomal subunit, where it forms part of the central protuberance. The polypeptide is Large ribosomal subunit protein uL18 (Azoarcus sp. (strain BH72)).